Reading from the N-terminus, the 279-residue chain is Movement protein (279 aa).

Residues 247–279 are disordered; the sequence is ESEELNVESPPAAIGSSSASRSEAFRPQVVNGL. Residues 254-268 show a composition bias toward low complexity; it reads ESPPAAIGSSSASRS.

The protein belongs to the cucumovirus movement protein family.

It localises to the host cell junction. The protein localises to the host plasmodesma. In terms of biological role, transports viral genome to neighboring plant cells directly through plasmosdesmata, without any budding. The movement protein allows efficient cell to cell propagation, by bypassing the host cell wall barrier. Acts by forming a tubular structure at the host plasmodesmata, enlarging it enough to allow free passage of virion capsids. This is Movement protein from Cucumis sativus (Cucumber).